The primary structure comprises 117 residues: UPF0321 protein PJ695.01c (117 aa).

The first 17 residues, 1 to 17 (MLLLLYICCLFLKFILA), serve as a signal peptide directing secretion. 4 N-linked (GlcNAc...) asparagine glycosylation sites follow: asparagine 39, asparagine 65, asparagine 71, and asparagine 104.

It belongs to the UPF0321 family.

The protein is UPF0321 protein PJ695.01c of Schizosaccharomyces pombe (strain 972 / ATCC 24843) (Fission yeast).